The sequence spans 200 residues: Holliday junction branch migration complex subunit RuvA (200 aa).

Positions methionine 1–isoleucine 64 are domain I. The domain II stretch occupies residues aspartate 65 to alanine 143. Positions proline 144–glutamine 149 are flexible linker. The interval valine 150 to lysine 200 is domain III.

The protein belongs to the RuvA family. Homotetramer. Forms an RuvA(8)-RuvB(12)-Holliday junction (HJ) complex. HJ DNA is sandwiched between 2 RuvA tetramers; dsDNA enters through RuvA and exits via RuvB. An RuvB hexamer assembles on each DNA strand where it exits the tetramer. Each RuvB hexamer is contacted by two RuvA subunits (via domain III) on 2 adjacent RuvB subunits; this complex drives branch migration. In the full resolvosome a probable DNA-RuvA(4)-RuvB(12)-RuvC(2) complex forms which resolves the HJ.

Its subcellular location is the cytoplasm. The RuvA-RuvB-RuvC complex processes Holliday junction (HJ) DNA during genetic recombination and DNA repair, while the RuvA-RuvB complex plays an important role in the rescue of blocked DNA replication forks via replication fork reversal (RFR). RuvA specifically binds to HJ cruciform DNA, conferring on it an open structure. The RuvB hexamer acts as an ATP-dependent pump, pulling dsDNA into and through the RuvAB complex. HJ branch migration allows RuvC to scan DNA until it finds its consensus sequence, where it cleaves and resolves the cruciform DNA. This Marinomonas sp. (strain MWYL1) protein is Holliday junction branch migration complex subunit RuvA.